The following is a 359-amino-acid chain: 3-dehydroquinate synthase (359 aa).

NAD(+) is bound by residues 69-74 (DGEAYK), 103-107 (GVIGD), 127-128 (TT), Lys-140, Lys-149, and 167-170 (CLKT). Residues Glu-182, His-245, and His-262 each coordinate Zn(2+).

Belongs to the sugar phosphate cyclases superfamily. Dehydroquinate synthase family. Co(2+) is required as a cofactor. The cofactor is Zn(2+). NAD(+) serves as cofactor.

Its subcellular location is the cytoplasm. It carries out the reaction 7-phospho-2-dehydro-3-deoxy-D-arabino-heptonate = 3-dehydroquinate + phosphate. The protein operates within metabolic intermediate biosynthesis; chorismate biosynthesis; chorismate from D-erythrose 4-phosphate and phosphoenolpyruvate: step 2/7. Catalyzes the conversion of 3-deoxy-D-arabino-heptulosonate 7-phosphate (DAHP) to dehydroquinate (DHQ). The sequence is that of 3-dehydroquinate synthase from Aeromonas salmonicida (strain A449).